We begin with the raw amino-acid sequence, 422 residues long: L-2-hydroxyglutarate dehydrogenase (422 aa).

Belongs to the L2HGDH family. It depends on FAD as a cofactor.

The protein resides in the cell inner membrane. The enzyme catalyses (S)-2-hydroxyglutarate + a quinone = a quinol + 2-oxoglutarate. It functions in the pathway amino-acid degradation. Its function is as follows. Catalyzes the dehydrogenation of L-2-hydroxyglutarate (L2HG) to alpha-ketoglutarate and couples to the respiratory chain by feeding electrons from the reaction into the membrane quinone pool. Functions in a L-lysine degradation pathway that proceeds via cadaverine, glutarate and L-2-hydroxyglutarate. Also displays some oxidase activity in vitro on L-2-hydroxyglutarate with O2 as the electron acceptor, but this activity is most likely not physiological. The sequence is that of L-2-hydroxyglutarate dehydrogenase from Salmonella houtenae.